Reading from the N-terminus, the 361-residue chain is Phospho-N-acetylmuramoyl-pentapeptide-transferase (361 aa).

10 consecutive transmembrane segments (helical) span residues 28–48, 73–93, 97–117, 134–154, 168–188, 200–220, 237–257, 264–284, 289–309, and 338–358; these read LAAL…IRSL, TMGG…WADL, YIWL…VDDY, FFWQ…TAEL, VAIP…IVGS, GLAI…AYVA, AGEL…FLWF, VFMG…ITVI, IVLV…MIQV, and QVVV…LSTL.

It belongs to the glycosyltransferase 4 family. MraY subfamily. It depends on Mg(2+) as a cofactor.

It localises to the cell inner membrane. It catalyses the reaction UDP-N-acetyl-alpha-D-muramoyl-L-alanyl-gamma-D-glutamyl-meso-2,6-diaminopimeloyl-D-alanyl-D-alanine + di-trans,octa-cis-undecaprenyl phosphate = di-trans,octa-cis-undecaprenyl diphospho-N-acetyl-alpha-D-muramoyl-L-alanyl-D-glutamyl-meso-2,6-diaminopimeloyl-D-alanyl-D-alanine + UMP. Its pathway is cell wall biogenesis; peptidoglycan biosynthesis. Functionally, catalyzes the initial step of the lipid cycle reactions in the biosynthesis of the cell wall peptidoglycan: transfers peptidoglycan precursor phospho-MurNAc-pentapeptide from UDP-MurNAc-pentapeptide onto the lipid carrier undecaprenyl phosphate, yielding undecaprenyl-pyrophosphoryl-MurNAc-pentapeptide, known as lipid I. The chain is Phospho-N-acetylmuramoyl-pentapeptide-transferase from Nitrosomonas eutropha (strain DSM 101675 / C91 / Nm57).